The sequence spans 234 residues: Sugar fermentation stimulation protein homolog (234 aa).

The protein belongs to the SfsA family.

This chain is Sugar fermentation stimulation protein homolog, found in Shewanella sp. (strain MR-7).